The chain runs to 285 residues: Phosphatidylglycerol--prolipoprotein diacylglyceryl transferase (285 aa).

4 helical membrane-spanning segments follow: residues 26 to 46, 71 to 91, 107 to 127, and 133 to 153; these read IALH…WWYV, FVVW…VLIW, WDGG…IIWF, and INIW…IGVV. Arg154 is a binding site for a 1,2-diacyl-sn-glycero-3-phospho-(1'-sn-glycerol). A run of 3 helical transmembrane segments spans residues 194-214, 218-238, and 256-276; these read LMEG…FKAF, GTVA…SEIF, and GFTY…YAIF.

This sequence belongs to the Lgt family.

The protein resides in the cell inner membrane. It carries out the reaction L-cysteinyl-[prolipoprotein] + a 1,2-diacyl-sn-glycero-3-phospho-(1'-sn-glycerol) = an S-1,2-diacyl-sn-glyceryl-L-cysteinyl-[prolipoprotein] + sn-glycerol 1-phosphate + H(+). It functions in the pathway protein modification; lipoprotein biosynthesis (diacylglyceryl transfer). Catalyzes the transfer of the diacylglyceryl group from phosphatidylglycerol to the sulfhydryl group of the N-terminal cysteine of a prolipoprotein, the first step in the formation of mature lipoproteins. This chain is Phosphatidylglycerol--prolipoprotein diacylglyceryl transferase, found in Bartonella bacilliformis (strain ATCC 35685 / KC583 / Herrer 020/F12,63).